Reading from the N-terminus, the 670-residue chain is Tripeptidyl-peptidase SED1 (670 aa).

The first 20 residues, 1–20 (MSTMIFMYFIYIVLYASGIA), serve as a signal peptide directing secretion. Residues 21–231 (ANLSYHVHEK…VGLLKNKILS (211 aa)) constitute a propeptide, removed in mature form. The region spanning 241–669 (LITPDCLRAL…DRMLDLFLQL (429 aa)) is the Peptidase S53 domain. Residues glutamate 318 and aspartate 322 each act as charge relay system in the active site. N-linked (GlcNAc...) asparagine glycans are attached at residues asparagine 334, asparagine 387, asparagine 488, asparagine 508, and asparagine 551. Serine 586 acts as the Charge relay system in catalysis. Aspartate 627, valine 628, glycine 647, and aspartate 649 together coordinate Ca(2+).

The cofactor is Ca(2+).

The protein localises to the secreted. Its subcellular location is the extracellular space. It catalyses the reaction Release of an N-terminal tripeptide from a polypeptide.. Its function is as follows. Secreted tripeptidyl-peptidase which degrades proteins at acidic pHs and is involved in virulence. The polypeptide is Tripeptidyl-peptidase SED1 (SED1) (Arthroderma otae (strain ATCC MYA-4605 / CBS 113480) (Microsporum canis)).